Consider the following 53-residue polypeptide: Large ribosomal subunit protein eL40 (53 aa).

It belongs to the eukaryotic ribosomal protein eL40 family.

This chain is Large ribosomal subunit protein eL40, found in Pyrobaculum calidifontis (strain DSM 21063 / JCM 11548 / VA1).